We begin with the raw amino-acid sequence, 457 residues long: Siroheme synthase (457 aa).

Residues 1–204 (MDHLPIFCQL…NDQKAITETT (204 aa)) are precorrin-2 dehydrogenase /sirohydrochlorin ferrochelatase. Residues 22-23 (DV) and 43-44 (LA) contribute to the NAD(+) site. Residue S128 is modified to Phosphoserine. Residues 216–457 (GEVVLVGAGP…RDKLNWFSNH (242 aa)) are uroporphyrinogen-III C-methyltransferase. P225 is an S-adenosyl-L-methionine binding site. The active-site Proton acceptor is D248. The active-site Proton donor is the K270. S-adenosyl-L-methionine-binding positions include 301-303 (GGD), I306, 331-332 (TA), M382, and G411.

The protein in the N-terminal section; belongs to the precorrin-2 dehydrogenase / sirohydrochlorin ferrochelatase family. In the C-terminal section; belongs to the precorrin methyltransferase family.

It catalyses the reaction uroporphyrinogen III + 2 S-adenosyl-L-methionine = precorrin-2 + 2 S-adenosyl-L-homocysteine + H(+). The enzyme catalyses precorrin-2 + NAD(+) = sirohydrochlorin + NADH + 2 H(+). The catalysed reaction is siroheme + 2 H(+) = sirohydrochlorin + Fe(2+). It participates in cofactor biosynthesis; adenosylcobalamin biosynthesis; precorrin-2 from uroporphyrinogen III: step 1/1. The protein operates within cofactor biosynthesis; adenosylcobalamin biosynthesis; sirohydrochlorin from precorrin-2: step 1/1. It functions in the pathway porphyrin-containing compound metabolism; siroheme biosynthesis; precorrin-2 from uroporphyrinogen III: step 1/1. Its pathway is porphyrin-containing compound metabolism; siroheme biosynthesis; siroheme from sirohydrochlorin: step 1/1. It participates in porphyrin-containing compound metabolism; siroheme biosynthesis; sirohydrochlorin from precorrin-2: step 1/1. Multifunctional enzyme that catalyzes the SAM-dependent methylations of uroporphyrinogen III at position C-2 and C-7 to form precorrin-2 via precorrin-1. Then it catalyzes the NAD-dependent ring dehydrogenation of precorrin-2 to yield sirohydrochlorin. Finally, it catalyzes the ferrochelation of sirohydrochlorin to yield siroheme. The protein is Siroheme synthase of Escherichia coli O17:K52:H18 (strain UMN026 / ExPEC).